The sequence spans 830 residues: P-selectin (830 aa).

The first 41 residues, 1–41 (MANCQIAILYQRFQRVVFGISQLLCFSALISELTNQKEVAA), serve as a signal peptide directing secretion. Topologically, residues 42–771 (WTYHYSTKAY…QAGPLTIQEA (730 aa)) are extracellular. N-linked (GlcNAc...) asparagine glycans are attached at residues Asn-54 and Asn-98. The 101-residue stretch at 58 to 158 (KYCQNRYTDL…HCLKKKHALC (101 aa)) folds into the C-type lectin domain. 23 cysteine pairs are disulfide-bonded: Cys-60/Cys-158, Cys-131/Cys-150, Cys-163/Cys-174, Cys-168/Cys-183, Cys-185/Cys-194, Cys-200/Cys-244, Cys-230/Cys-257, Cys-262/Cys-306, Cys-292/Cys-319, Cys-324/Cys-368, Cys-354/Cys-381, Cys-386/Cys-430, Cys-416/Cys-443, Cys-448/Cys-492, Cys-478/Cys-505, Cys-510/Cys-554, Cys-540/Cys-567, Cys-572/Cys-616, Cys-602/Cys-629, Cys-642/Cys-686, Cys-672/Cys-699, Cys-704/Cys-748, and Cys-734/Cys-761. Ca(2+) is bound by residues Glu-121, Asn-123, and Asn-124. An a carbohydrate-binding site is contributed by Asn-123. A carbohydrate-binding residues include Glu-133 and Asn-146. Ca(2+)-binding residues include Asn-146 and Asp-147. Residues 159-195 (YTASCQDMSCSKQGECLETIGNYTCSCYPGFYGPECE) form the EGF-like domain. N-linked (GlcNAc...) asparagine glycosylation occurs at Asn-180. Sushi domains follow at residues 198–259 (RECG…QCLA), 260–321 (AQCP…VCKA), 322–383 (VQCQ…TCEA), 384–445 (ISCE…VCQA), 446–507 (LQCQ…ECQA), 508–569 (IPCT…MCEA), 570–631 (IKCP…TCKG), 640–701 (VQCP…ACRA), and 702–763 (VKCS…TCQA). Residues Asn-212 and Asn-219 are each glycosylated (N-linked (GlcNAc...) asparagine). Residue Asn-411 is glycosylated (N-linked (GlcNAc...) asparagine). N-linked (GlcNAc...) asparagine glycosylation is present at Asn-460. The N-linked (GlcNAc...) asparagine glycan is linked to Asn-518. Residue Asn-665 is glycosylated (N-linked (GlcNAc...) asparagine). Asn-716, Asn-723, and Asn-741 each carry an N-linked (GlcNAc...) asparagine glycan. Residues 772–795 (LTYFGGAVASTIGLIMGGTLLALL) form a helical membrane-spanning segment. The Cytoplasmic portion of the chain corresponds to 796 to 830 (RKRFRQKDDGKCPLNPHSHLGTYGVFTNAAFDPSP). Residue Cys-807 is the site of S-palmitoyl cysteine; alternate attachment. The S-stearoyl cysteine; alternate moiety is linked to residue Cys-807. The Endocytosis signal motif lies at 818-821 (YGVF). Residues 821 to 830 (FTNAAFDPSP) are interaction with SNX17.

Belongs to the selectin/LECAM family. As to quaternary structure, interacts with SNX17. Interacts with SELPLG/PSGL1 and PODXL2 and mediates neutrophil adhesion and leukocyte rolling. This interaction requires the sialyl-Lewis X epitope of SELPLG and PODXL2, and specific tyrosine sulfation on SELPLG. Interacts (via C-type lectin domain) with alpha-IIb/beta3 integrin ITGA2B:ITGB3 and alpha-V/beta-3 integrin ITGAV:ITGB3. Interacts with alpha5/beta1 integrin ITGA5:ITGB1 and alpha4/beta1 integrin ITGA4:ITGB. In terms of tissue distribution, stored in the alpha-granules of platelets and Weibel-Palade bodies of endothelial cells. Upon cell activation by agonists, P-selectin is transported rapidly to the cell surface.

The protein localises to the cell membrane. Its function is as follows. Ca(2+)-dependent receptor for myeloid cells that binds to carbohydrates on neutrophils and monocytes. Mediates the interaction of activated endothelial cells or platelets with leukocytes. The ligand recognized is sialyl-Lewis X. Mediates rapid rolling of leukocyte rolling over vascular surfaces during the initial steps in inflammation through interaction with SELPLG. Mediates cell-cell interactions and cell adhesion via the interaction with integrin alpha-IIb/beta3 (ITGA2B:ITGB3) and integrin alpha-V/beta-3 (ITGAV:ITGB3). This Homo sapiens (Human) protein is P-selectin (SELP).